Here is a 516-residue protein sequence, read N- to C-terminus: GMP synthase [glutamine-hydrolyzing] (516 aa).

Residues 7–203 enclose the Glutamine amidotransferase type-1 domain; sequence SVIVLDFGSQ…LIDIAGITPD (197 aa). Cys84 (nucleophile) is an active-site residue. Residues His177 and Glu179 contribute to the active site. The GMPS ATP-PPase domain maps to 204–391; that stretch reads WSPKSFIQHQ…LGIAEDILMR (188 aa). 231–237 contributes to the ATP binding site; that stretch reads SGGVDST.

Homodimer.

It carries out the reaction XMP + L-glutamine + ATP + H2O = GMP + L-glutamate + AMP + diphosphate + 2 H(+). Its pathway is purine metabolism; GMP biosynthesis; GMP from XMP (L-Gln route): step 1/1. Its function is as follows. Catalyzes the synthesis of GMP from XMP. This is GMP synthase [glutamine-hydrolyzing] from Chlorobaculum tepidum (strain ATCC 49652 / DSM 12025 / NBRC 103806 / TLS) (Chlorobium tepidum).